Consider the following 467-residue polypeptide: ATP synthase subunit beta (467 aa).

Residue 156-163 (GGAGVGKT) participates in ATP binding.

This sequence belongs to the ATPase alpha/beta chains family. F-type ATPases have 2 components, CF(1) - the catalytic core - and CF(0) - the membrane proton channel. CF(1) has five subunits: alpha(3), beta(3), gamma(1), delta(1), epsilon(1). CF(0) has three main subunits: a(1), b(2) and c(9-12). The alpha and beta chains form an alternating ring which encloses part of the gamma chain. CF(1) is attached to CF(0) by a central stalk formed by the gamma and epsilon chains, while a peripheral stalk is formed by the delta and b chains.

The protein localises to the cell inner membrane. The catalysed reaction is ATP + H2O + 4 H(+)(in) = ADP + phosphate + 5 H(+)(out). Functionally, produces ATP from ADP in the presence of a proton gradient across the membrane. The catalytic sites are hosted primarily by the beta subunits. This Ralstonia nicotianae (strain ATCC BAA-1114 / GMI1000) (Ralstonia solanacearum) protein is ATP synthase subunit beta.